The sequence spans 195 residues: Porimin (195 aa).

A signal peptide spans 1–23 (MALCARAALLLGVLQVLALLGAA). The Extracellular portion of the chain corresponds to 24–152 (QDPTDAQGSA…PTKGKGSKFD (129 aa)). N-linked (GlcNAc...) asparagine glycans are attached at residues N36, N45, N51, N59, N109, and N115. The tract at residues 99-127 (VTPTASKSTPNASASPNSTHTSASMTTPA) is disordered. Over residues 101-126 (PTASKSTPNASASPNSTHTSASMTTP) the composition is skewed to polar residues. Residues 153–173 (AGSFVGGIVLTLGVLSILYIG) traverse the membrane as a helical segment. At 174–195 (CKMYYSRRGIRYRSIDEHDAII) the chain is on the cytoplasmic side. S187 bears the Phosphoserine mark.

This sequence belongs to the CD164 family.

The protein localises to the membrane. Functionally, implicated in oncotic cell death, characterized by cell swelling, organelle swelling, vacuolization and increased membrane permeability. In Mus musculus (Mouse), this protein is Porimin (Tmem123).